A 143-amino-acid chain; its full sequence is Glutamyl-tRNA(Gln) amidotransferase subunit C, chloroplastic/mitochondrial (143 aa).

It belongs to the GatC family. In terms of assembly, subunit of the heterotrimeric GatCAB amidotransferase (AdT) complex, composed of A, B and C subunits.

It is found in the mitochondrion. It localises to the plastid. The protein resides in the chloroplast. The enzyme catalyses L-glutamyl-tRNA(Gln) + L-glutamine + ATP + H2O = L-glutaminyl-tRNA(Gln) + L-glutamate + ADP + phosphate + H(+). Its function is as follows. Allows the formation of correctly charged Gln-tRNA(Gln) through the transamidation of misacylated Glu-tRNA(Gln) in chloroplasts and mitochondria. The reaction takes place in the presence of glutamine and ATP through an activated gamma-phospho-Glu-tRNA(Gln). In Ricinus communis (Castor bean), this protein is Glutamyl-tRNA(Gln) amidotransferase subunit C, chloroplastic/mitochondrial.